Consider the following 1028-residue polypeptide: U2 snRNP-associated SURP motif-containing protein (1028 aa).

Disordered stretches follow at residues 1–111 (MADK…EDEK) and 141–272 (VNAA…DPST). Ala2 is modified (N-acetylalanine). Positions 7-16 (GGSQKASSKT) are enriched in polar residues. Over residues 45-54 (TRPKSPRKHN) the composition is skewed to basic residues. A compositionally biased stretch (basic and acidic residues) spans 55–64 (YRNESARESL). Ser67 is modified (phosphoserine). A Glycyl lysine isopeptide (Lys-Gly) (interchain with G-Cter in SUMO2) cross-link involves residue Lys80. The stretch at 92–121 (AKRTLSKKEQEELKKKEDEKAAAEIYEEFL) forms a coiled coil. Composition is skewed to basic and acidic residues over residues 97-111 (SKKEQEELKKKEDEK) and 144-155 (AKEEHETDEKRG). Glycyl lysine isopeptide (Lys-Gly) (interchain with G-Cter in SUMO2) cross-links involve residues Lys145 and Lys168. The segment covering 169–178 (NPPNQSSNER) has biased composition (polar residues). Basic and acidic residues predominate over residues 186–222 (ETKKPPLKKGEKEKKKSNLELFKEELKQIQEERDERH). Residues 192–232 (LKKGEKEKKKSNLELFKEELKQIQEERDERHKTKGRLSRFE) are a coiled coil. Ser202 carries the phosphoserine modification. Residue Lys208 forms a Glycyl lysine isopeptide (Lys-Gly) (interchain with G-Cter in SUMO2) linkage. Phosphoserine is present on Ser236. Basic and acidic residues predominate over residues 239–249 (DGQRRSMDAPS). Residues 273–354 (TNLYLGNINP…FEMKLGWGKA (82 aa)) form the RRM domain. An SURP motif repeat occupies 429 to 472 (LIHRMIEFVVREGPMFEAMIMNREINNPMFRFLFENQTPAHVYY). Ser484 is modified (phosphoserine). Residues 533-678 (LKEEQRDKLE…KLQNIFLGLV (146 aa)) enclose the CID domain. Thr718 carries the post-translational modification Phosphothreonine. Residues Lys747 and Lys748 each participate in a glycyl lysine isopeptide (Lys-Gly) (interchain with G-Cter in SUMO2) cross-link. The residue at position 759 (Lys759) is an N6-acetyllysine; alternate. Lys759 participates in a covalent cross-link: Glycyl lysine isopeptide (Lys-Gly) (interchain with G-Cter in SUMO2); alternate. Disordered regions lie at residues 777–840 (KWEL…EEKR) and 854–1028 (QDEL…KNKH). Residues 779-809 (ELFDQHEESEEEENQNQEEESEDEEDTQSSK) adopt a coiled-coil conformation. A compositionally biased stretch (acidic residues) spans 785-805 (EESEEEENQNQEEESEDEEDT). Residues Ser787, Ser799, and Ser810 each carry the phosphoserine modification. Basic and acidic residues-rich tracts occupy residues 809 to 840 (KSEEHHLYSNPIKEEMTESKFSKYSEMSEEKR) and 873 to 921 (QVEH…TPTR). Glycyl lysine isopeptide (Lys-Gly) (interchain with G-Cter in SUMO2) cross-links involve residues Lys821, Lys828, and Lys831. Residues 836–914 (SEEKRAKLRE…ESRSKDEKEK (79 aa)) adopt a coiled-coil conformation. Thr930 carries the post-translational modification Phosphothreonine. Phosphoserine is present on residues Ser945 and Ser947. Residues 949-979 (KSERSERSERSHKESSRSRSSHKDSPRDVSK) are compositionally biased toward basic and acidic residues. Residues 990 to 1028 (TPKRSRRSRSRSPKKSGKKSRSQSRSPHRSHKKSKKNKH) show a composition bias toward basic residues.

Belongs to the splicing factor SR family. In terms of assembly, interacts with ERBB4.

The protein resides in the nucleus. The chain is U2 snRNP-associated SURP motif-containing protein (U2SURP) from Pongo abelii (Sumatran orangutan).